Consider the following 209-residue polypeptide: Uracil phosphoribosyltransferase (209 aa).

Residues Arg79, Arg104, and 131–139 (DPMLATGGS) contribute to the 5-phospho-alpha-D-ribose 1-diphosphate site. Uracil contacts are provided by residues Ile194 and 199–201 (GDA). Residue Asp200 participates in 5-phospho-alpha-D-ribose 1-diphosphate binding.

The protein belongs to the UPRTase family. Requires Mg(2+) as cofactor.

The enzyme catalyses UMP + diphosphate = 5-phospho-alpha-D-ribose 1-diphosphate + uracil. Its pathway is pyrimidine metabolism; UMP biosynthesis via salvage pathway; UMP from uracil: step 1/1. Allosterically activated by GTP. Catalyzes the conversion of uracil and 5-phospho-alpha-D-ribose 1-diphosphate (PRPP) to UMP and diphosphate. The chain is Uracil phosphoribosyltransferase from Finegoldia magna (strain ATCC 29328 / DSM 20472 / WAL 2508) (Peptostreptococcus magnus).